The following is a 122-amino-acid chain: Large ribosomal subunit protein uL14c (122 aa).

It belongs to the universal ribosomal protein uL14 family. In terms of assembly, part of the 50S ribosomal subunit.

Its subcellular location is the plastid. The protein resides in the chloroplast. Functionally, binds to 23S rRNA. The polypeptide is Large ribosomal subunit protein uL14c (Cycas taitungensis (Prince sago)).